We begin with the raw amino-acid sequence, 207 residues long: Large ribosomal subunit protein uL4 (207 aa).

A disordered region spans residues 44-77 (RRQGTHDTKTRSEVRGGGRKPWRQKGTGRARHGT). Over residues 47-59 (GTHDTKTRSEVRG) the composition is skewed to basic and acidic residues. Positions 60-77 (GGRKPWRQKGTGRARHGT) are enriched in basic residues.

The protein belongs to the universal ribosomal protein uL4 family. In terms of assembly, part of the 50S ribosomal subunit.

One of the primary rRNA binding proteins, this protein initially binds near the 5'-end of the 23S rRNA. It is important during the early stages of 50S assembly. It makes multiple contacts with different domains of the 23S rRNA in the assembled 50S subunit and ribosome. In terms of biological role, forms part of the polypeptide exit tunnel. The chain is Large ribosomal subunit protein uL4 from Desulforudis audaxviator (strain MP104C).